The primary structure comprises 875 residues: Protein SEY1 (875 aa).

The Cytoplasmic segment spans residues 1 to 749; the sequence is MVANGHFASN…KRSAIGGITQ (749 aa). The GB1/RHD3-type G domain occupies 49-307; it reads GFNYHLISVF…IPADGFAVYA (259 aa). 59–66 is a GTP binding site; the sequence is GSQSTGKS. Residues 482–506 are a coiled coil; that stretch reads SNYQQELSLYQKDLERISGQLRRDE. A disordered region spans residues 676-704; it reads LDKWIGHTPSSATPADEEDLTPIGGVDED. Over residues 690 to 704 the composition is skewed to acidic residues; the sequence is ADEEDLTPIGGVDED. The chain crosses the membrane as a helical span at residues 750–770; sequence VPLYFYGLLLALGWNEIMAVL. The Lumenal segment spans residues 771–773; it reads RNP. Residues 774-794 form a helical membrane-spanning segment; sequence AYFFLLFVCAIGAYVTYQLNL. Topologically, residues 795-875 are cytoplasmic; it reads WGPIIKMTEA…ADDDDVDDDF (81 aa). The segment at 831–875 is disordered; sequence MAMSGARNATEEHEMSNLNRKSGERGGQKYRGEDVADDDDVDDDF. The segment covering 839-864 has biased composition (basic and acidic residues); the sequence is ATEEHEMSNLNRKSGERGGQKYRGED. A compositionally biased stretch (acidic residues) spans 865–875; the sequence is VADDDDVDDDF.

This sequence belongs to the TRAFAC class dynamin-like GTPase superfamily. GB1/RHD3 GTPase family. RHD3 subfamily.

The protein resides in the endoplasmic reticulum membrane. Its function is as follows. Cooperates with the reticulon proteins and tubule-shaping DP1 family proteins to generate and maintain the structure of the tubular endoplasmic reticulum network. Has GTPase activity, which is required for its function in ER organization. The protein is Protein SEY1 of Ajellomyces dermatitidis (strain ER-3 / ATCC MYA-2586) (Blastomyces dermatitidis).